The chain runs to 115 residues: NADH-ubiquinone oxidoreductase chain 3 (115 aa).

The next 3 membrane-spanning stretches (helical) occupy residues 5 to 25 (LTFM…FWLP), 55 to 75 (FFLV…LLPL), and 86 to 106 (LMLT…AYEW).

It belongs to the complex I subunit 3 family. In terms of assembly, core subunit of respiratory chain NADH dehydrogenase (Complex I) which is composed of 45 different subunits. Interacts with TMEM186. Interacts with TMEM242.

The protein localises to the mitochondrion inner membrane. It carries out the reaction a ubiquinone + NADH + 5 H(+)(in) = a ubiquinol + NAD(+) + 4 H(+)(out). Functionally, core subunit of the mitochondrial membrane respiratory chain NADH dehydrogenase (Complex I) which catalyzes electron transfer from NADH through the respiratory chain, using ubiquinone as an electron acceptor. Essential for the catalytic activity of complex I. In Avahi unicolor (Sambirano woolly lemur), this protein is NADH-ubiquinone oxidoreductase chain 3.